A 263-amino-acid polypeptide reads, in one-letter code: Indole-3-glycerol phosphate synthase (263 aa).

The protein belongs to the TrpC family.

The catalysed reaction is 1-(2-carboxyphenylamino)-1-deoxy-D-ribulose 5-phosphate + H(+) = (1S,2R)-1-C-(indol-3-yl)glycerol 3-phosphate + CO2 + H2O. Its pathway is amino-acid biosynthesis; L-tryptophan biosynthesis; L-tryptophan from chorismate: step 4/5. The polypeptide is Indole-3-glycerol phosphate synthase (Polaromonas naphthalenivorans (strain CJ2)).